Here is a 653-residue protein sequence, read N- to C-terminus: Modification methylase StsI (653 aa).

This sequence belongs to the N(4)/N(6)-methyltransferase family. In terms of assembly, monomer.

It carries out the reaction a 2'-deoxyadenosine in DNA + S-adenosyl-L-methionine = an N(6)-methyl-2'-deoxyadenosine in DNA + S-adenosyl-L-homocysteine + H(+). Its function is as follows. An alpha subtype methylase that recognizes the double-stranded sequence 5'-GGATG-3' in one strand and 3'-CATCC-5' in the other, methylates A of both strands, and protects the DNA from cleavage by the StsI endonuclease. The 2 domains of the protein participate in modification of the two strands. This Streptococcus sanguinis protein is Modification methylase StsI (stsIM).